A 221-amino-acid chain; its full sequence is Lipoprotein-releasing system ATP-binding protein LolD (221 aa).

An ABC transporter domain is found at 6-220; that stretch reads LTLKNVSKHY…YKLKHGALNM (215 aa). 42–49 lines the ATP pocket; it reads GSSGSGKS.

It belongs to the ABC transporter superfamily. Lipoprotein translocase (TC 3.A.1.125) family. The complex is composed of two ATP-binding proteins (LolD) and two transmembrane proteins (LolC and LolE).

The protein resides in the cell inner membrane. Part of the ABC transporter complex LolCDE involved in the translocation of mature outer membrane-directed lipoproteins, from the inner membrane to the periplasmic chaperone, LolA. Responsible for the formation of the LolA-lipoprotein complex in an ATP-dependent manner. The sequence is that of Lipoprotein-releasing system ATP-binding protein LolD from Rickettsia bellii (strain RML369-C).